The chain runs to 156 residues: Large ribosomal subunit protein eL24 (156 aa).

The disordered stretch occupies residues 87 to 156 (LELIKERRSQ…AFQKVHATSR (70 aa)). A compositionally biased stretch (basic and acidic residues) spans 89–129 (LIKERRSQKPSDRKAARDVKLAKDKEAKKADKAARKAEKAK). Low complexity predominate over residues 130–147 (SAAAGAQSKVSKQQSKGA).

This sequence belongs to the eukaryotic ribosomal protein eL24 family.

The chain is Large ribosomal subunit protein eL24 (RPL24) from Debaryomyces hansenii (strain ATCC 36239 / CBS 767 / BCRC 21394 / JCM 1990 / NBRC 0083 / IGC 2968) (Yeast).